The following is a 194-amino-acid chain: Protein ORF31 (194 aa).

The first 25 residues, 1–25 (MKSVASPLCQFHGVFCLYQCRQCLA), serve as a signal peptide directing secretion.

It belongs to the herpesviridae UL92 family. Interacts with ORF34.

Its subcellular location is the host nucleus. The protein resides in the host cytoplasm. Functionally, plays an important role in the expression of late genes. May play a role in viral replication. This is Protein ORF31 (ORF31) from Homo sapiens (Human).